The chain runs to 440 residues: Inner membrane metabolite transport protein YhjE (440 aa).

Over 1–34 the chain is Cytoplasmic; it reads MQATATTLDHEQEYTPINSRNKVLVASLIGTAIE. Residues 35-55 form a helical membrane-spanning segment; sequence FFDFYIYATAAVIVFPHIFFP. Residues 56-66 lie on the Periplasmic side of the membrane; it reads QGDPTAATLQS. Residues 67-87 form a helical membrane-spanning segment; the sequence is LATFAIAFVARPIGSAVFGHF. Residues 88–108 lie on the Cytoplasmic side of the membrane; that stretch reads GDRVGRKATLVASLLTMGIST. The next 2 helical transmembrane spans lie at 109-129 and 130-150; these read VVIG…LLLA and LARF…ALLA. Topologically, residues 151-167 are cytoplasmic; it reads TENAPPRKRALYGSFPQ. The helical transmembrane segment at 168 to 188 threads the bilayer; sequence LGAPIGFFFANGTFLLLSWLL. The Periplasmic segment spans residues 189–192; that stretch reads TDEQ. A helical membrane pass occupies residues 193 to 213; the sequence is FMSWGWRVPFIFSAVLVIIGL. The Cytoplasmic segment spans residues 214-248; that stretch reads YVRVSLHESPVFEKVAKAKKQVKIPLGTLLTKHVR. Residues 249 to 269 traverse the membrane as a helical segment; the sequence is VTVLGTFIMLATYTLFYIMTV. The Periplasmic portion of the chain corresponds to 270-289; it reads YSMTFSTAAAPVGLGLPRNE. A helical membrane pass occupies residues 290–310; it reads VLWMLMMAVIGFGVMVPVAGL. Topologically, residues 311–320 are cytoplasmic; sequence LADAFGRRKS. The chain crosses the membrane as a helical span at residues 321–341; the sequence is MVIITTLIILFALFAFNPLLG. Residues 342–345 lie on the Periplasmic side of the membrane; the sequence is SGNP. Residues 346 to 366 traverse the membrane as a helical segment; it reads ILVFAFLLLGLSLMGLTFGPM. At 367–384 the chain is on the cytoplasmic side; the sequence is GALLPELFPTEVRYTGAS. Residues 385–405 form a helical membrane-spanning segment; the sequence is FSYNVASILGASVAPYIAAWL. Topologically, residues 406-410 are periplasmic; the sequence is QTNYG. A helical transmembrane segment spans residues 411-431; sequence LGAVGLYLAAMAGLTLIALLL. Residues 432–440 lie on the Cytoplasmic side of the membrane; that stretch reads THETRHQSL.

This sequence belongs to the major facilitator superfamily. Metabolite:H+ Symporter (MHS) family (TC 2.A.1.6) family.

The protein localises to the cell inner membrane. The protein is Inner membrane metabolite transport protein YhjE (yhjE) of Escherichia coli (strain K12).